The sequence spans 356 residues: L-Lys-D/L-Arg epimerase (356 aa).

Residues threonine 135 and 160–162 (KVK) each bind substrate. Mg(2+) is bound by residues aspartate 190, glutamate 216, and aspartate 241. Substrate-binding positions include lysine 266, aspartate 296, and 319-321 (DLD).

This sequence belongs to the mandelate racemase/muconate lactonizing enzyme family. Mg(2+) is required as a cofactor.

Its function is as follows. Catalyzes the epimerization of L-Lys-L-Arg to L-Lys-D-Arg. Can also catalyze the epimerization of other cationic dipeptides, such as L-Arg-L-Arg, L-Lys-L-Lys and L-Lys-L-His, but with lower efficiency (in vitro). The polypeptide is L-Lys-D/L-Arg epimerase (Methylococcus capsulatus (strain ATCC 33009 / NCIMB 11132 / Bath)).